Consider the following 217-residue polypeptide: Ribonuclease HII (217 aa).

The RNase H type-2 domain occupies 12–201 (DLVAGVDEVG…VRTAHEARAA (190 aa)). A divalent metal cation-binding residues include Asp18, Glu19, and Asp110.

Belongs to the RNase HII family. Mn(2+) is required as a cofactor. Requires Mg(2+) as cofactor.

The protein localises to the cytoplasm. It catalyses the reaction Endonucleolytic cleavage to 5'-phosphomonoester.. Endonuclease that specifically degrades the RNA of RNA-DNA hybrids. The sequence is that of Ribonuclease HII from Pseudomonas syringae pv. tomato (strain ATCC BAA-871 / DC3000).